A 535-amino-acid chain; its full sequence is Putative subtilisin-like proteinase 2 (535 aa).

Residues 1–17 form the signal peptide; it reads MFFVGVAVLAALQSVWG. The Peptidase S8 domain occupies 221-475; sequence NWIFRVLQIK…IPRLGCKGRI (255 aa). Residues Asp-255 and His-277 each act as charge relay system in the active site. Cys-369 and Cys-400 form a disulfide bridge. The Charge relay system role is filled by Ser-420. Residues 489 to 509 form a helical membrane-spanning segment; the sequence is IVPLVFVVLITSALLYLLLIG.

The protein belongs to the peptidase S8 family.

It localises to the membrane. May be involved in the degradation of proteins for nutrient acquisition or possess a regulatory function by proteolytic activation of proproteins. The chain is Putative subtilisin-like proteinase 2 (SPL2) from Encephalitozoon cuniculi (strain GB-M1) (Microsporidian parasite).